Here is a 302-residue protein sequence, read N- to C-terminus: Deoxyhypusine hydroxylase (302 aa).

6 HEAT-like PBS-type repeats span residues 23-49 (ERFR…AFDD), 54-80 (LKHE…VLKD), 87-113 (VRHE…YKQD), 175-201 (DRYR…GLKD), 206-232 (FRHE…NLED), and 239-265 (VRHE…YAED). Residues H56, E57, H89, and E90 each coordinate Fe cation. Fe cation contacts are provided by H208, E209, H241, and E242.

The protein belongs to the deoxyhypusine hydroxylase family. It depends on Fe(2+) as a cofactor.

It is found in the endoplasmic reticulum membrane. The enzyme catalyses [eIF5A protein]-deoxyhypusine + AH2 + O2 = [eIF5A protein]-hypusine + A + H2O. It participates in protein modification; eIF5A hypusination. Catalyzes the hydroxylation of the N(6)-(4-aminobutyl)-L-lysine intermediate to form hypusine, an essential post-translational modification only found in mature eIF-5A factor. Essential for organismal viability and plays a role in a wide number of important processes such as cell growth and proliferation, and regulates induction of autophagy and protein synthesis. Has a role in eIF-5A-mediated translational control. In Drosophila melanogaster (Fruit fly), this protein is Deoxyhypusine hydroxylase.